The primary structure comprises 441 residues: Ribulose bisphosphate carboxylase/oxygenase activase, chloroplastic (441 aa).

Position 167 to 174 (167 to 174 (VWGGKGQG)) interacts with ATP.

This sequence belongs to the RuBisCO activase family.

It localises to the plastid. Its subcellular location is the chloroplast stroma. In terms of biological role, activation of RuBisCO (ribulose-1,5-bisphosphate carboxylase/oxygenase; EC 4.1.1.39) involves the ATP-dependent carboxylation of the epsilon-amino group of lysine leading to a carbamate structure. In Phaseolus vulgaris (Kidney bean), this protein is Ribulose bisphosphate carboxylase/oxygenase activase, chloroplastic (RCA1).